Consider the following 242-residue polypeptide: uncharacterized protein (242 aa).

A signal peptide spans 1–17 (MKFSPAYLLAFAPIVAA). Asn47, Asn86, Asn122, Asn159, and Asn178 each carry an N-linked (GlcNAc...) asparagine glycan. Residues 176–214 (NANESTADGQAQSGSSGSSSDSGSHSGHSSATQTSSTTA) form a disordered region. Positions 180–214 (STADGQAQSGSSGSSSDSGSHSGHSSATQTSSTTA) are enriched in low complexity. Ala218 is lipidated: GPI-like-anchor amidated alanine. Positions 219-242 (GAVALETAAWGILGAAVVGGLAVL) are cleaved as a propeptide — removed in mature form.

In terms of processing, the GPI-like anchor contains a phosphoceramide lipid group. The anchor position has not been determined.

The protein localises to the cell membrane. This is an uncharacterized protein from Aspergillus fumigatus (strain ATCC MYA-4609 / CBS 101355 / FGSC A1100 / Af293) (Neosartorya fumigata).